The primary structure comprises 479 residues: Ribulose bisphosphate carboxylase large chain 2 (479 aa).

2 residues coordinate substrate: Asn116 and Thr166. Catalysis depends on Lys168, which acts as the Proton acceptor. Lys170 serves as a coordination point for substrate. The Mg(2+) site is built by Lys194, Asp196, and Glu197. The residue at position 194 (Lys194) is an N6-carboxylysine. His287 functions as the Proton acceptor in the catalytic mechanism. Residues Arg288, His320, and Ser372 each contribute to the substrate site.

This sequence belongs to the RuBisCO large chain family. Type I subfamily. As to quaternary structure, heterohexadecamer of 8 large chains and 8 small chains. It depends on Mg(2+) as a cofactor.

It carries out the reaction 2 (2R)-3-phosphoglycerate + 2 H(+) = D-ribulose 1,5-bisphosphate + CO2 + H2O. It catalyses the reaction D-ribulose 1,5-bisphosphate + O2 = 2-phosphoglycolate + (2R)-3-phosphoglycerate + 2 H(+). RuBisCO catalyzes two reactions: the carboxylation of D-ribulose 1,5-bisphosphate, the primary event in carbon dioxide fixation, as well as the oxidative fragmentation of the pentose substrate. Both reactions occur simultaneously and in competition at the same active site. The polypeptide is Ribulose bisphosphate carboxylase large chain 2 (Bradyrhizobium sp. (strain ORS 278)).